Reading from the N-terminus, the 51-residue chain is Lantibiotic streptococcin A-M49 (51 aa).

Residues 1-25 (MTKEHEIINSIQEVSLEELDQIIGA) constitute a propeptide that is removed on maturation. Cross-links (beta-methyllanthionine (Thr-Cys)) lie at residues 33-38 (TISHEC) and 42-50 (TWAFLATCC). Residues 35–49 (SHECHLNTWAFLATC) constitute a cross-link (lanthionine (Ser-Cys)). At Thr-48 the chain carries 2,3-didehydrobutyrine.

This sequence belongs to the type A lantibiotic family. Post-translationally, maturation of lantibiotics involves the enzymatic conversion of Thr, and Ser into dehydrated AA and the formation of thioether bonds with cysteine. This is followed by membrane translocation and cleavage of the modified precursor.

It localises to the secreted. The protein resides in the cell surface. Its function is as follows. Lanthionine-containing peptide antibiotic (lantibiotic) active on certain Gram-positive bacteria. The bactericidal activity of lantibiotics is based on depolarization of energized bacterial cytoplasmic membranes, initiated by the formation of aqueous transmembrane pores. This is Lantibiotic streptococcin A-M49 (scnA') from Streptococcus pyogenes serotype M49.